Consider the following 151-residue polypeptide: Cell division protein SepF (151 aa).

A compositionally biased stretch (acidic residues) spans 17-29; the sequence is DNEDDYQDQEDEQ. The tract at residues 17-42 is disordered; that stretch reads DNEDDYQDQEDEQAQQPAPEQPVDNH.

This sequence belongs to the SepF family. As to quaternary structure, homodimer. Interacts with FtsZ.

Its subcellular location is the cytoplasm. Cell division protein that is part of the divisome complex and is recruited early to the Z-ring. Probably stimulates Z-ring formation, perhaps through the cross-linking of FtsZ protofilaments. Its function overlaps with FtsA. In Lacticaseibacillus casei (strain BL23) (Lactobacillus casei), this protein is Cell division protein SepF.